A 128-amino-acid chain; its full sequence is Glycine cleavage system H protein (128 aa).

In terms of domain architecture, Lipoyl-binding spans 22–104; it reads VATVGITEHA…YGEGWIFKMK (83 aa). The residue at position 63 (Lys63) is an N6-lipoyllysine.

Belongs to the GcvH family. In terms of assembly, the glycine cleavage system is composed of four proteins: P, T, L and H. The cofactor is (R)-lipoate.

The glycine cleavage system catalyzes the degradation of glycine. The H protein shuttles the methylamine group of glycine from the P protein to the T protein. The chain is Glycine cleavage system H protein from Methylacidiphilum infernorum (isolate V4) (Methylokorus infernorum (strain V4)).